Here is a 358-residue protein sequence, read N- to C-terminus: Alanine racemase (358 aa).

Catalysis depends on Lys-35, which acts as the Proton acceptor; specific for D-alanine. Lys-35 carries the N6-(pyridoxal phosphate)lysine modification. Arg-130 is a substrate binding site. Tyr-255 (proton acceptor; specific for L-alanine) is an active-site residue. Met-303 contacts substrate.

This sequence belongs to the alanine racemase family. Pyridoxal 5'-phosphate serves as cofactor.

The catalysed reaction is L-alanine = D-alanine. It participates in amino-acid biosynthesis; D-alanine biosynthesis; D-alanine from L-alanine: step 1/1. In terms of biological role, catalyzes the interconversion of L-alanine and D-alanine. May also act on other amino acids. The sequence is that of Alanine racemase (alr) from Shewanella baltica (strain OS223).